Here is a 101-residue protein sequence, read N- to C-terminus: NADH-quinone oxidoreductase subunit K 1 (101 aa).

The next 3 membrane-spanning stretches (helical) occupy residues I4 to V24, V31 to F51, and I64 to F84.

It belongs to the complex I subunit 4L family. In terms of assembly, NDH-1 is composed of 14 different subunits. Subunits NuoA, H, J, K, L, M, N constitute the membrane sector of the complex.

Its subcellular location is the cell inner membrane. It catalyses the reaction a quinone + NADH + 5 H(+)(in) = a quinol + NAD(+) + 4 H(+)(out). Its function is as follows. NDH-1 shuttles electrons from NADH, via FMN and iron-sulfur (Fe-S) centers, to quinones in the respiratory chain. The immediate electron acceptor for the enzyme in this species is believed to be ubiquinone. Couples the redox reaction to proton translocation (for every two electrons transferred, four hydrogen ions are translocated across the cytoplasmic membrane), and thus conserves the redox energy in a proton gradient. In Koribacter versatilis (strain Ellin345), this protein is NADH-quinone oxidoreductase subunit K 1.